The following is a 210-amino-acid chain: Ovomucoid (210 aa).

The signal sequence occupies residues 1–24 (MAMAGVFVLFSFVLCGFLPDAAFG). Kazal-like domains are found at residues 25–88 (AEVD…ECKE), 89–153 (TVPM…GCRK), and 156–210 (AAVS…FGKC). 3 disulfides stabilise this stretch: Cys29–Cys68, Cys46–Cys65, and Cys54–Cys86. Asn34 carries an N-linked (GlcNAc...) asparagine glycan. N-linked (GlcNAc...) asparagine glycans are attached at residues Asn77, Asn93, and Asn99. 6 disulfides stabilise this stretch: Cys94-Cys133, Cys111-Cys130, Cys119-Cys151, Cys162-Cys192, Cys170-Cys189, and Cys178-Cys210. An N-linked (GlcNAc...) asparagine; partial glycan is attached at Asn199.

The protein localises to the secreted. In terms of biological role, serine protease inhibitor. Inhibits trypsin. The sequence is that of Ovomucoid from Gallus gallus (Chicken).